The sequence spans 511 residues: Keratin, type II cytoskeletal 72 (511 aa).

The segment at 1 to 124 is head; that stretch reads MSRQLTHFPR…DPEIQRVRAQ (124 aa). The tract at residues 125–160 is coil 1A; sequence EREQIKALNNKFASFIDKVRFLEQQNQVLETKWNLL. An IF rod domain is found at 125–438; it reads EREQIKALNN…KLLESEECRM (314 aa). The interval 161–179 is linker 1; the sequence is QQLDLNNCRKNLEPIYEGY. Residues 180-271 are coil 1B; that stretch reads ISNLQKQLEM…CLYEGEITQI (92 aa). The tract at residues 272–295 is linker 12; that stretch reads QSHISDTSIVLSMDNNRDLDLDSI. The coil 2 stretch occupies residues 296 to 434; that stretch reads IAEVRAQYEE…ATYRKLLESE (139 aa). A tail region spans residues 435 to 511; the sequence is ECRMSGEYPN…SSCATKKASR (77 aa). Positions 486-511 are disordered; sequence GSCGSELKDPLAKTSGSSCATKKASR.

This sequence belongs to the intermediate filament family. In terms of assembly, heterotetramer of two type I and two type II keratins. In terms of tissue distribution, highly expressed in hair follicles from scalp and eyebrow. Also expressed in palmoplantar epidermis. Not expressed in face skin despite the presence of fine hairs histologically. In hair, it is specifically present in the inner root sheath (IRS) of the hair follicle. Present in the IRS cuticle, but not in Henle or Huxley layers of the IRS. In the IRS cuticle, its presence is delayed up to the height of the apex of the dermal papilla (at protein level).

Functionally, has a role in hair formation. Specific component of keratin intermediate filaments in the inner root sheath (IRS) of the hair follicle. This chain is Keratin, type II cytoskeletal 72 (KRT72), found in Homo sapiens (Human).